The chain runs to 123 residues: Ribonuclease P protein component (123 aa).

It belongs to the RnpA family. In terms of assembly, consists of a catalytic RNA component (M1 or rnpB) and a protein subunit.

It carries out the reaction Endonucleolytic cleavage of RNA, removing 5'-extranucleotides from tRNA precursor.. Its function is as follows. RNaseP catalyzes the removal of the 5'-leader sequence from pre-tRNA to produce the mature 5'-terminus. It can also cleave other RNA substrates such as 4.5S RNA. The protein component plays an auxiliary but essential role in vivo by binding to the 5'-leader sequence and broadening the substrate specificity of the ribozyme. The sequence is that of Ribonuclease P protein component from Streptococcus pneumoniae (strain Hungary19A-6).